Reading from the N-terminus, the 465-residue chain is Sodium-coupled neutral amino acid transporter 7 (465 aa).

11 helical membrane passes run 54 to 74, 82 to 102, 128 to 148, 177 to 197, 204 to 224, 244 to 264, 275 to 295, 318 to 338, 370 to 390, 394 to 414, and 427 to 447; these read AVFI…PAAF, AGVT…VILA, ICEL…LIII, FTIT…KEIG, TLSV…YIWP, FNAM…VPVF, WWGV…GTGV, VAVA…YPIL, ILQT…IPDI, ISLI…LCLI, and SWNA…FIFG.

The protein belongs to the amino acid/polyamine transporter 2 family.

It is found in the lysosome membrane. It localises to the cell projection. Its subcellular location is the axon. The catalysed reaction is L-asparagine(in) + Na(+)(in) = L-asparagine(out) + Na(+)(out). The enzyme catalyses L-glutamine(in) + Na(+)(in) = L-glutamine(out) + Na(+)(out). Functionally, symporter that selectively cotransports sodium ions and amino acids, such as L-glutamine and L-asparagine from the lysosome into the cytoplasm and may participates in mTORC1 activation. The transport activity requires an acidic lysosomal lumen. The chain is Sodium-coupled neutral amino acid transporter 7 from Danio rerio (Zebrafish).